The primary structure comprises 443 residues: Glutamyl-tRNA reductase (443 aa).

Substrate-binding positions include 49–52 (TCNR), serine 109, 114–116 (ETQ), and glutamine 120. The Nucleophile role is filled by cysteine 50. 189–194 (GAGDMS) lines the NADP(+) pocket.

Belongs to the glutamyl-tRNA reductase family. In terms of assembly, homodimer.

The enzyme catalyses (S)-4-amino-5-oxopentanoate + tRNA(Glu) + NADP(+) = L-glutamyl-tRNA(Glu) + NADPH + H(+). The protein operates within porphyrin-containing compound metabolism; protoporphyrin-IX biosynthesis; 5-aminolevulinate from L-glutamyl-tRNA(Glu): step 1/2. Functionally, catalyzes the NADPH-dependent reduction of glutamyl-tRNA(Glu) to glutamate 1-semialdehyde (GSA). This Staphylococcus saprophyticus subsp. saprophyticus (strain ATCC 15305 / DSM 20229 / NCIMB 8711 / NCTC 7292 / S-41) protein is Glutamyl-tRNA reductase.